The following is a 66-amino-acid chain: COP-associated protein (66 aa).

The region spanning 1 to 66 is the HMA domain; that stretch reads MKVTFQVPSI…ALLDAGQEVV (66 aa). Residues cysteine 12 and cysteine 15 each coordinate Cu cation.

In terms of biological role, part of a cation-transporting system which is associated with copper export out of the H.pylori cells. This is COP-associated protein (copP) from Helicobacter pylori (strain J99 / ATCC 700824) (Campylobacter pylori J99).